We begin with the raw amino-acid sequence, 178 residues long: Small ribosomal subunit protein uS4 (178 aa).

In terms of domain architecture, S4 RNA-binding spans Arg-104–His-166. Residues Pro-157–Gln-178 form a disordered region.

The protein belongs to the universal ribosomal protein uS4 family. Part of the 30S ribosomal subunit. Contacts protein S5. The interaction surface between S4 and S5 is involved in control of translational fidelity.

One of the primary rRNA binding proteins, it binds directly to 16S rRNA where it nucleates assembly of the body of the 30S subunit. Functionally, with S5 and S12 plays an important role in translational accuracy. The polypeptide is Small ribosomal subunit protein uS4 (Methanococcus maripaludis (strain C7 / ATCC BAA-1331)).